The chain runs to 374 residues: S-adenosylmethionine:tRNA ribosyltransferase-isomerase (374 aa).

It belongs to the QueA family. In terms of assembly, monomer.

Its subcellular location is the cytoplasm. It catalyses the reaction 7-aminomethyl-7-carbaguanosine(34) in tRNA + S-adenosyl-L-methionine = epoxyqueuosine(34) in tRNA + adenine + L-methionine + 2 H(+). Its pathway is tRNA modification; tRNA-queuosine biosynthesis. Its function is as follows. Transfers and isomerizes the ribose moiety from AdoMet to the 7-aminomethyl group of 7-deazaguanine (preQ1-tRNA) to give epoxyqueuosine (oQ-tRNA). This chain is S-adenosylmethionine:tRNA ribosyltransferase-isomerase, found in Prochlorococcus marinus (strain MIT 9215).